The chain runs to 1555 residues: Pre-mRNA cleavage complex 2 protein Pcf11 (1555 aa).

Position 2 is an N-acetylserine (Ser-2). Positions 14-142 (AREDACRDYQ…ALDVRVNSLD (129 aa)) constitute a CID domain. A Phosphoserine; by WNK1 modification is found at Ser-120. Thr-121 is subject to Phosphothreonine; by WNK1. A disordered region spans residues 167-186 (NKSPEEPSTPGTVVSSPSIS). Ser-169 and Ser-182 each carry phosphoserine. The span at 174-186 (STPGTVVSSPSIS) shows a compositional bias: low complexity. Residues 202-239 (QLIRQQLLAKQKQLLELQQKKLELELEQAKAQLAVSLS) are a coiled coil. The disordered stretch occupies residues 266-648 (VKAPHQVPVQ…QQQHRLSVDA (383 aa)). A Glycyl lysine isopeptide (Lys-Gly) (interchain with G-Cter in SUMO2) cross-link involves residue Lys-291. Positions 307-317 (HGKDQSHRKEF) are enriched in basic and acidic residues. The span at 320 to 333 (NTLNQSDTKTSKTI) shows a compositional bias: polar residues. Lys-328 is covalently cross-linked (Glycyl lysine isopeptide (Lys-Gly) (interchain with G-Cter in SUMO2)). Basic and acidic residues-rich tracts occupy residues 342–364 (KQEKSKSGEKITKKELDQLDSKS), 380–421 (HTKD…DVKE), and 427–442 (EKKDKDEHMKSSEHRL). A Glycyl lysine isopeptide (Lys-Gly) (interchain with G-Cter in SUMO2) cross-link involves residue Lys-456. Thr-459 carries the post-translational modification Phosphothreonine. Residues 475-486 (STRKRSRSRSPK) are compositionally biased toward basic residues. Phosphoserine occurs at positions 489, 494, 509, and 511. Basic residues predominate over residues 494 to 508 (SPKRRDRRSPKRRQR). The segment covering 529-567 (SHMEEFTPPSREDRNAKRSTKQDIRDPRRMKKTEEERPQ) has biased composition (basic and acidic residues). The segment covering 568 to 578 (ETTNQHSTKSG) has biased composition (polar residues). The segment covering 599 to 615 (SGWEENKSLQQVDEHSK) has biased composition (basic and acidic residues). A Phosphoserine modification is found at Ser-645. Lys-654 is covalently cross-linked (Glycyl lysine isopeptide (Lys-Gly) (interchain with G-Cter in SUMO2)). Ser-705 carries the phosphoserine modification. Disordered regions lie at residues 707 to 732 (FNDRFPLKRPRYEDSDKPFVDSPASR) and 749 to 781 (RPLFDGPSRPSVARDGPTKMIFEGPNKLSPRID). Over residues 716-725 (PRYEDSDKPF) the composition is skewed to basic and acidic residues. Lys-723 participates in a covalent cross-link: Glycyl lysine isopeptide (Lys-Gly) (interchain with G-Cter in SUMO2). Phosphoserine occurs at positions 728 and 777. Phosphothreonine is present on Thr-785. Phosphoserine is present on Ser-794. Asymmetric dimethylarginine occurs at positions 805, 820, and 833. Ser-851 carries the post-translational modification Phosphoserine. 6 positions are modified to asymmetric dimethylarginine: Arg-929, Arg-942, Arg-955, Arg-981, Arg-994, and Arg-1007. The segment at 1056 to 1081 (HGQPGPRFERTPGQPGPQRFDGPPGQ) is disordered. Arg-1093 and Arg-1104 each carry asymmetric dimethylarginine. Disordered regions lie at residues 1127–1147 (VSFNQTGPYNDPPGNAFNAPS) and 1159–1187 (FDSPQGPNFNGPHGPGNQSFSNPLNRASG). The residue at position 1161 (Ser-1161) is a Phosphoserine. A compositionally biased stretch (low complexity) spans 1162–1175 (PQGPNFNGPHGPGN). Lys-1278 is covalently cross-linked (Glycyl lysine isopeptide (Lys-Gly) (interchain with G-Cter in SUMO2)). Positions 1289–1298 (SATTQVSEVT) are enriched in polar residues. The segment at 1289–1315 (SATTQVSEVTAQPPPEEEEDQNEDQDV) is disordered. Residues 1303–1315 (PEEEEDQNEDQDV) show a composition bias toward acidic residues. Glycyl lysine isopeptide (Lys-Gly) (interchain with G-Cter in SUMO2) cross-links involve residues Lys-1419, Lys-1511, and Lys-1524. The tract at residues 1516 to 1555 (EPCDSPKVKEERIDTPPACTEESIATPSEIKTENDTVESV) is disordered. Residues 1519–1529 (DSPKVKEERID) are compositionally biased toward basic and acidic residues. Thr-1530 carries the phosphothreonine modification. Residue Lys-1546 forms a Glycyl lysine isopeptide (Lys-Gly) (interchain with G-Cter in SUMO2) linkage.

Associates with the phosphorylated CTD domain of POLR2A /RNA polymerase II. Phosphorylation at Ser-120 and/or Thr-121 by WNK1 weakens its association with POLR2A/RNA polymerase II, promoting transcript release from the chromatin template and mRNA export to the cytoplasm.

The protein resides in the nucleus. Its function is as follows. Component of pre-mRNA cleavage complex II, which promotes transcription termination by RNA polymerase II. The polypeptide is Pre-mRNA cleavage complex 2 protein Pcf11 (Homo sapiens (Human)).